The sequence spans 460 residues: Argininosuccinate lyase (460 aa).

This sequence belongs to the lyase 1 family. Argininosuccinate lyase subfamily.

The protein resides in the cytoplasm. It carries out the reaction 2-(N(omega)-L-arginino)succinate = fumarate + L-arginine. The protein operates within amino-acid biosynthesis; L-arginine biosynthesis; L-arginine from L-ornithine and carbamoyl phosphate: step 3/3. The sequence is that of Argininosuccinate lyase from Oleidesulfovibrio alaskensis (strain ATCC BAA-1058 / DSM 17464 / G20) (Desulfovibrio alaskensis).